The primary structure comprises 98 residues: ESAT-6-like protein EsxW (98 aa).

This sequence belongs to the WXG100 family. CFP-10 subfamily. Forms a tight 1:1 complex with EsxV. The complex is destabilized at low pH. Unfolding of the proteins is required for dissociation of the complex and membrane binding.

The protein resides in the secreted. This Mycobacterium tuberculosis (strain ATCC 25618 / H37Rv) protein is ESAT-6-like protein EsxW.